The primary structure comprises 445 residues: GRAM domain-containing protein 2B (445 aa).

M1 carries the post-translational modification N-acetylmethionine. The segment covering 1–10 (MVKKPISSSD) has biased composition (polar residues). Positions 1–119 (MVKKPISSSD…RKKSSSSSQY (119 aa)) are disordered. A compositionally biased stretch (low complexity) spans 18-37 (PSSPKSSAGASHSSTDSPSS). 2 stretches are compositionally biased toward polar residues: residues 56 to 68 (KSPT…SSVE) and 82 to 93 (SKSSFDGSNLLS). Positions 94-112 (DKNDCKTESKADSKTERKK) are enriched in basic and acidic residues. Positions 123–190 (MHFHKLFLDV…FSVTLIKKTK (68 aa)) constitute a GRAM domain. Phosphoserine is present on residues S238, S255, and S265. A disordered region spans residues 277-331 (DLEGYSSSGSQTPESENSRDFHVTESQTVLNVTKGETKPPRTDAHGSRAPDGKAK). Polar residues predominate over residues 281–291 (YSSSGSQTPES). Basic and acidic residues predominate over residues 311–330 (GETKPPRTDAHGSRAPDGKA).

This is GRAM domain-containing protein 2B (Gramd2b) from Rattus norvegicus (Rat).